The following is a 608-amino-acid chain: MQFQTEVNQLLQLMIHSLYSNKEIFLRELISNASDALDKLNFLSVSDDKYKSLKFEPKIEIKIDKDKKTLSISDNGIGMDKDDLINNLGTIAKSGTKSFLENLSGDAKKDSQLIGQFGVGFYSAFMVASKIEVLSKKALDDKAYLWSSDANGYEIDDANKEEQGTSITLYLKDDEFANAYKIESIIEKYSNHIQFPIFMEKEEFTPAKEGEEEGKTELKISQINKANALWRMQKSSLKAEDYERFYEQNFHDSNKPLLYLHTKSEGKLEYNSLFFIPQNAPFDLFRVDYQSGLKLYVKRVFISDDDKELLPTYLRFVRGIIDVEDLPLNVSREILQENQILKGIKEASVKKILGELEKLKNNDKEKYLSFFKTFGKVLKEGLYGFGGEKDSLLKLMLYKSTKGENLRSLEEYKNDLQGEQKEIFYIAGNNESLLRTSPLLEEYKQKNIEVLLMDDEIDSLVTPMLEFEGLKFVSINQVEDKNELSDEEKNTFAPLVAKFKELLKDQVEDVRLTSRLKDSPSCIVYDKNKPDFAMQQLLKQMGQEQNFKPILEINPKHAIFTGLKNNESFSADIATLVLNMAKLSEGMGVDNPAEFNASLTKIINKAFS.

Residues 1 to 332 (MQFQTEVNQL…VEDLPLNVSR (332 aa)) form an a; substrate-binding region. The interval 333–536 (EILQENQILK…KNKPDFAMQQ (204 aa)) is b. The segment at 537–608 (LLKQMGQEQN…LTKIINKAFS (72 aa)) is c.

This sequence belongs to the heat shock protein 90 family. In terms of assembly, homodimer.

Its subcellular location is the cytoplasm. Its function is as follows. Molecular chaperone. Has ATPase activity. This Campylobacter jejuni subsp. jejuni serotype O:2 (strain ATCC 700819 / NCTC 11168) protein is Chaperone protein HtpG.